The sequence spans 450 residues: L-lysine-epsilon aminotransferase (450 aa).

Pyridoxal 5'-phosphate-binding residues include glycine 127 and alanine 128. 2-oxoglutarate is bound by residues arginine 168 and glutamine 274. Arginine 168 serves as a coordination point for L-lysine. Glutamine 274 contacts pyridoxal 5'-phosphate. Lysine 300 is subject to N6-(pyridoxal phosphate)lysine. Arginine 423 serves as a coordination point for 2-oxoglutarate.

It belongs to the class-III pyridoxal-phosphate-dependent aminotransferase family. The cofactor is pyridoxal 5'-phosphate.

The enzyme catalyses L-lysine + 2-oxoglutarate = (S)-2-amino-6-oxohexanoate + L-glutamate. It functions in the pathway antibiotic biosynthesis; cephamycin C biosynthesis. In terms of biological role, catalyzes the transfer of the terminal amino group of L-lysine to alpha-ketoglutarate to yield L-glutamate and 2-aminoadipate 6-semialdehyde ((S)-2-amino-6-oxohexanoate), which is spontaneously converted to the dehydrated form 1-piperideine 6-carboxylate. This Amycolatopsis lactamdurans (Nocardia lactamdurans) protein is L-lysine-epsilon aminotransferase.